A 420-amino-acid chain; its full sequence is Tubulin epsilon and delta complex protein 1 (420 aa).

A coiled-coil region spans residues 276 to 340 (SEGGLGELES…AVQQELAALQ (65 aa)). The segment covering 342 to 351 (SWEQSSTPGQ) has biased composition (polar residues). Residues 342–369 (SWEQSSTPGQPQRPHRLVRSKDGAPRPQ) form a disordered region. The stretch at 377–409 (IRTLSAKEACLKKALHQLQRQCQQELARLAGAL) forms a coiled coil.

Interacts with TEDC2. Found in a complex with TEDC1, TEDC2, TUBE1 and TUBD1.

The protein resides in the cell projection. It is found in the cilium. Its subcellular location is the cytoplasm. It localises to the cytoskeleton. The protein localises to the microtubule organizing center. The protein resides in the centrosome. It is found in the centriole. Acts as a positive regulator of ciliary hedgehog signaling. Required for centriole stability. May play a role in counteracting perturbation of actin filaments, such as after treatment with the actin depolymerizing microbial metabolite Chivosazole F. The sequence is that of Tubulin epsilon and delta complex protein 1 from Mus musculus (Mouse).